The primary structure comprises 154 residues: Small ribosomal subunit protein bS16 (154 aa).

Residues 82 to 154 (VQERAARSNP…EAAAEESTEA (73 aa)) form a disordered region. The segment covering 92 to 109 (KKAEPGEKAKERAEERAA) has biased composition (basic and acidic residues). Positions 110-129 (KLAAAEEAANAPAEEPAAEP) are enriched in low complexity. The span at 142-154 (PAEEAAAEESTEA) shows a compositional bias: acidic residues.

The protein belongs to the bacterial ribosomal protein bS16 family.

The protein is Small ribosomal subunit protein bS16 of Rhizorhabdus wittichii (strain DSM 6014 / CCUG 31198 / JCM 15750 / NBRC 105917 / EY 4224 / RW1) (Sphingomonas wittichii).